We begin with the raw amino-acid sequence, 76 residues long: MAYRQSFYQFLMTLRDPDSNGDLAQFANNAQFDSTFPRQEQDRTRLSEYLEENAAYLPSMTIFDDAYQAYEEKMQY.

Belongs to the UPF0346 family.

This is UPF0346 protein LBUL_1194 from Lactobacillus delbrueckii subsp. bulgaricus (strain ATCC BAA-365 / Lb-18).